Consider the following 387-residue polypeptide: S-adenosylmethionine synthase (387 aa).

His15 contributes to the ATP binding site. Asp17 provides a ligand contact to Mg(2+). Glu43 is a K(+) binding site. Residues Glu56 and Gln99 each contribute to the L-methionine site. The tract at residues 99–109 (QSPDIALGVNR) is flexible loop. ATP-binding positions include 166–168 (DAK), 232–233 (RF), Asp241, 247–248 (RK), Ala264, and Lys268. Residue Asp241 participates in L-methionine binding. Lys272 is an L-methionine binding site.

The protein belongs to the AdoMet synthase family. As to quaternary structure, homotetramer; dimer of dimers. Mg(2+) serves as cofactor. Requires K(+) as cofactor.

The protein localises to the cytoplasm. It catalyses the reaction L-methionine + ATP + H2O = S-adenosyl-L-methionine + phosphate + diphosphate. Its pathway is amino-acid biosynthesis; S-adenosyl-L-methionine biosynthesis; S-adenosyl-L-methionine from L-methionine: step 1/1. Functionally, catalyzes the formation of S-adenosylmethionine (AdoMet) from methionine and ATP. The overall synthetic reaction is composed of two sequential steps, AdoMet formation and the subsequent tripolyphosphate hydrolysis which occurs prior to release of AdoMet from the enzyme. This chain is S-adenosylmethionine synthase, found in Nitrosomonas eutropha (strain DSM 101675 / C91 / Nm57).